A 202-amino-acid polypeptide reads, in one-letter code: Probable molybdenum cofactor guanylyltransferase (202 aa).

GTP is bound by residues 9–11 (VAG), Lys22, Asn50, Asp77, and Asp102. A Mg(2+)-binding site is contributed by Asp102.

It belongs to the MobA family. It depends on Mg(2+) as a cofactor.

It is found in the cytoplasm. The catalysed reaction is Mo-molybdopterin + GTP + H(+) = Mo-molybdopterin guanine dinucleotide + diphosphate. Functionally, transfers a GMP moiety from GTP to Mo-molybdopterin (Mo-MPT) cofactor (Moco or molybdenum cofactor) to form Mo-molybdopterin guanine dinucleotide (Mo-MGD) cofactor. The sequence is that of Probable molybdenum cofactor guanylyltransferase from Natronomonas pharaonis (strain ATCC 35678 / DSM 2160 / CIP 103997 / JCM 8858 / NBRC 14720 / NCIMB 2260 / Gabara) (Halobacterium pharaonis).